The sequence spans 541 residues: ATP synthase subunit alpha (541 aa).

ATP is bound at residue 173–180; that stretch reads GDRQTGKT. Residues 517–527 are compositionally biased toward basic and acidic residues; sequence GIEPGVEEHES. The interval 517–541 is disordered; the sequence is GIEPGVEEHESLGATAVNQETIVKK. The segment covering 532 to 541 has biased composition (polar residues); sequence AVNQETIVKK.

This sequence belongs to the ATPase alpha/beta chains family. In terms of assembly, F-type ATPases have 2 components, CF(1) - the catalytic core - and CF(0) - the membrane proton channel. CF(1) has five subunits: alpha(3), beta(3), gamma(1), delta(1), epsilon(1). CF(0) has three main subunits: a(1), b(2) and c(9-12). The alpha and beta chains form an alternating ring which encloses part of the gamma chain. CF(1) is attached to CF(0) by a central stalk formed by the gamma and epsilon chains, while a peripheral stalk is formed by the delta and b chains.

The protein localises to the cell membrane. The catalysed reaction is ATP + H2O + 4 H(+)(in) = ADP + phosphate + 5 H(+)(out). Produces ATP from ADP in the presence of a proton gradient across the membrane. The alpha chain is a regulatory subunit. This Kocuria rhizophila (strain ATCC 9341 / DSM 348 / NBRC 103217 / DC2201) protein is ATP synthase subunit alpha.